A 381-amino-acid polypeptide reads, in one-letter code: Mannitol-1-phosphate 5-dehydrogenase (381 aa).

3–14 (AVHFGAGNIGRG) is a binding site for NAD(+).

It belongs to the mannitol dehydrogenase family.

It carries out the reaction D-mannitol 1-phosphate + NAD(+) = beta-D-fructose 6-phosphate + NADH + H(+). This chain is Mannitol-1-phosphate 5-dehydrogenase, found in Photobacterium profundum (strain SS9).